Here is a 139-residue protein sequence, read N- to C-terminus: Putative pre-16S rRNA nuclease (139 aa).

It belongs to the YqgF nuclease family.

It is found in the cytoplasm. Functionally, could be a nuclease involved in processing of the 5'-end of pre-16S rRNA. This is Putative pre-16S rRNA nuclease from Haemophilus influenzae (strain PittEE).